The sequence spans 172 residues: MSEENQVAATEAEEQTPFELQIQRIYIKDVSFEAPNLPTIFHQEWKPQLGFELDTETVKLADDLYEVILHINVSTTLEDSGDTAFICEVKQAGVFTIKGLEGIQLAHCLASQCPSVLYPYARELIASLVNRGTFPALNLSPVNFDALFVDYLQRQEQEAAEAEEETPAPASN.

This sequence belongs to the SecB family. Homotetramer, a dimer of dimers. One homotetramer interacts with 1 SecA dimer.

It localises to the cytoplasm. Its function is as follows. One of the proteins required for the normal export of preproteins out of the cell cytoplasm. It is a molecular chaperone that binds to a subset of precursor proteins, maintaining them in a translocation-competent state. It also specifically binds to its receptor SecA. The polypeptide is Protein-export protein SecB (Haemophilus ducreyi (strain 35000HP / ATCC 700724)).